The primary structure comprises 144 residues: Small ribosomal subunit protein bS6 (144 aa).

Residues 95–144 (ELEEGPSAMMQSKSRDDRPRRGEGDDRPRRDDREDRPRRDREPRRMEGGE) are disordered. Positions 107–144 (KSRDDRPRRGEGDDRPRRDDREDRPRRDREPRRMEGGE) are enriched in basic and acidic residues.

Belongs to the bacterial ribosomal protein bS6 family.

Functionally, binds together with bS18 to 16S ribosomal RNA. In Paramagnetospirillum magneticum (strain ATCC 700264 / AMB-1) (Magnetospirillum magneticum), this protein is Small ribosomal subunit protein bS6.